Consider the following 345-residue polypeptide: Succinylglutamate desuccinylase (345 aa).

His64, Glu67, and His161 together coordinate Zn(2+). The active site involves Glu225.

The protein belongs to the AspA/AstE family. Succinylglutamate desuccinylase subfamily. The cofactor is Zn(2+).

It carries out the reaction N-succinyl-L-glutamate + H2O = L-glutamate + succinate. It functions in the pathway amino-acid degradation; L-arginine degradation via AST pathway; L-glutamate and succinate from L-arginine: step 5/5. Its function is as follows. Transforms N(2)-succinylglutamate into succinate and glutamate. In Shewanella piezotolerans (strain WP3 / JCM 13877), this protein is Succinylglutamate desuccinylase.